A 245-amino-acid polypeptide reads, in one-letter code: Carboxy-S-adenosyl-L-methionine synthase (245 aa).

S-adenosyl-L-methionine contacts are provided by residues Tyr-42, 67–69, 92–93, 120–121, Asn-135, and Arg-202; these read GCS, DN, and DI.

Belongs to the class I-like SAM-binding methyltransferase superfamily. Cx-SAM synthase family. As to quaternary structure, homodimer.

The enzyme catalyses prephenate + S-adenosyl-L-methionine = carboxy-S-adenosyl-L-methionine + 3-phenylpyruvate + H2O. In terms of biological role, catalyzes the conversion of S-adenosyl-L-methionine (SAM) to carboxy-S-adenosyl-L-methionine (Cx-SAM). This chain is Carboxy-S-adenosyl-L-methionine synthase, found in Vibrio vulnificus (strain YJ016).